A 654-amino-acid polypeptide reads, in one-letter code: WD repeat-containing protein 70 (654 aa).

2 disordered regions span residues 1–26 (MERS…VTMG) and 43–175 (FEQT…DSHE). The span at 45–78 (QTRRTAVERSRKTLEAREKEEEMNREKELRRQNE) shows a compositional bias: basic and acidic residues. Residues 99-111 (RDTSSSESEQSSD) show a composition bias toward low complexity. Over residues 147-164 (NEEEEEAEEEEEEEEEEE) the composition is skewed to acidic residues. Residues 165–175 (NPVHKIPDSHE) are compositionally biased toward basic and acidic residues. WD repeat units lie at residues 180 to 219 (HGTK…ASFK), 227 to 268 (CECH…ECIK), 281 to 321 (GHTA…KQKS), 330 to 369 (GKKV…HPKF), 376 to 415 (DSGT…KPLF), 421 to 466 (PTMF…RVYE), and 469 to 508 (ITDA…QRGA). Residue lysine 296 forms a Glycyl lysine isopeptide (Lys-Gly) (interchain with G-Cter in SUMO2) linkage. An N6-acetyllysine modification is found at lysine 452. A compositionally biased stretch (basic and acidic residues) spans 540–565 (REPRQRSTRKQLEKDRLDPLKSHKPE). The disordered stretch occupies residues 540 to 579 (REPRQRSTRKQLEKDRLDPLKSHKPEPPVAGPGRGGRVGT). Position 579 is a phosphothreonine (threonine 579). Glycyl lysine isopeptide (Lys-Gly) (interchain with G-Cter in SUMO2) cross-links involve residues lysine 590 and lysine 596. Phosphoserine occurs at positions 621 and 638. Residues 630–654 (KTMFAQVESDDEEAKNEPEWKKRKI) are disordered. The span at 644–654 (KNEPEWKKRKI) shows a compositional bias: basic and acidic residues.

This sequence belongs to the WD repeat GAD-1 family.

This Homo sapiens (Human) protein is WD repeat-containing protein 70 (WDR70).